We begin with the raw amino-acid sequence, 405 residues long: L-rhamnonate dehydratase (405 aa).

Substrate contacts are provided by His33 and Arg59. Asp226, Glu252, and Glu280 together coordinate Mg(2+). The Proton acceptor role is filled by His329. Glu349 contacts substrate.

It belongs to the mandelate racemase/muconate lactonizing enzyme family. RhamD subfamily. As to quaternary structure, homooctamer; tetramer of dimers. Mg(2+) serves as cofactor.

It carries out the reaction L-rhamnonate = 2-dehydro-3-deoxy-L-rhamnonate + H2O. Its function is as follows. Catalyzes the dehydration of L-rhamnonate to 2-keto-3-deoxy-L-rhamnonate (KDR). Can also dehydrate L-lyxonate and L-mannonate, although less efficiently, but not 2-keto-4-hydroxyheptane-1,7-dioate. This is L-rhamnonate dehydratase (rhmD) from Salmonella typhimurium (strain LT2 / SGSC1412 / ATCC 700720).